A 346-amino-acid polypeptide reads, in one-letter code: UDP-N-acetylenolpyruvoylglucosamine reductase (346 aa).

Residues 18–189 (LRAQARAFIA…VSVVFALKTH (172 aa)) enclose the FAD-binding PCMH-type domain. Arginine 165 is a catalytic residue. The active-site Proton donor is serine 240. Glutamate 336 is a catalytic residue.

The protein belongs to the MurB family. FAD serves as cofactor.

It is found in the cytoplasm. It carries out the reaction UDP-N-acetyl-alpha-D-muramate + NADP(+) = UDP-N-acetyl-3-O-(1-carboxyvinyl)-alpha-D-glucosamine + NADPH + H(+). The protein operates within cell wall biogenesis; peptidoglycan biosynthesis. In terms of biological role, cell wall formation. This chain is UDP-N-acetylenolpyruvoylglucosamine reductase, found in Neisseria meningitidis serogroup B (strain ATCC BAA-335 / MC58).